Here is a 576-residue protein sequence, read N- to C-terminus: MAVFPIGSHFAPPHQLTKRHVIATSSPISISTRLPQNVSFSKVSGVTGSTRLSKHGVLVRAEDKIRSSSSPSSLDEPIDEDLMDSSGLCDPLCSVDEPSSSYFEANYQPKTDIIKALAILAAALTGTAAINHSWVAANQDVAMALLFGIGYAGIIFEESLAFNKSGIGLLMAVSLWVVRSIGAPSTEIAVLDLQHATAEVSEIVFFLLGAMTIVEIVDAHQGFKLVTDNITTRKPKTLLWVVGFVTFFLSSILDNLTSTIVMVSLIRKLVPQSEYRKLLGGVVVIAANAGGAWTPIGDVTTTMLWIHGQISTLPTMKDLFLPSVVSLAVPLALMSLTSEVNGKEQDPKDVLASEKMAPRGKLVFGVGLGALVFVPVFKALTGLPPYMGILLGLGVLWILTDAIHYGESERQKLKVPQALSRIDTQGALFFLGILLSVSSLEAAGILREIANYLDANIPNVELIASAIGVVSAIIDNVPLVAATMGMYDLTSFPQDSEFWQLIAFCAGTGGSMLVIGSAAGVAFMGMEKVDFFWYFRKVSGFAFAGYAAGIAAYLAVHNLHFEIPTTVAQIPFLTGS.

The transit peptide at 1-60 (MAVFPIGSHFAPPHQLTKRHVIATSSPISISTRLPQNVSFSKVSGVTGSTRLSKHGVLVR) directs the protein to the chloroplast. 9 helical membrane passes run 237-257 (TLLWVVGFVTFFLSSILDNLT), 279-299 (LGGVVVIAANAGGAWTPIGDV), 320-340 (FLPSVVSLAVPLALMSLTSEV), 357-377 (APRGKLVFGVGLGALVFVPVF), 379-399 (ALTGLPPYMGILLGLGVLWIL), 426-446 (GALFFLGILLSVSSLEAAGIL), 462-482 (LIASAIGVVSAIIDNVPLVAA), 501-521 (LIAFCAGTGGSMLVIGSAAGV), and 541-561 (FAFAGYAAGIAAYLAVHNLHF).

The protein belongs to the NhaD Na(+)/H(+) (TC 2.A.62) antiporter family. Mostly expressed in mature and senescent leaves, and, to a lower extent, in seeds, roots, shoots, flowers and developing siliques.

It localises to the plastid. Its subcellular location is the chloroplast membrane. It is found in the chloroplast envelope. Its function is as follows. Na(+)/H(+) antiporter that extrudes sodium in exchange for external protons. The chain is Sodium/proton antiporter 1 from Arabidopsis thaliana (Mouse-ear cress).